A 956-amino-acid polypeptide reads, in one-letter code: Endogenous retrovirus group K member 8 Pol protein (956 aa).

In terms of domain architecture, Reverse transcriptase spans 57–245 (LEKGHIEPSF…TPFHYLGMQI (189 aa)). Residues 161 to 164 (LPQG) carry the LPQG motif. A YXDD motif is present at residues 195-198 (YIDD). In terms of domain architecture, RNase H type-1 spans 460-590 (LENALTVFTD…ADLLVSSALI (131 aa)). Mg(2+) contacts are provided by D469, E497, D517, and D582. The Integrase-type zinc-finger motif lies at 587–628 (SALIKAQELHALTHVNAAGLKNKFDVTWKQAKDIVQHCTQCQ). Residues H596, H600, C624, and C627 each coordinate Zn(2+). Residues 642-803 (RGLCPNALWQ…TSAEQHLTGK (162 aa)) form the Integrase catalytic domain. The integrase-type DNA-binding region spans 811–859 (KLIWWKDNKNKTWEIGKVITWGRGFACVSPGENQLPVWIPTRHLKFYNE). The interval 864–890 (AKKSTSAETETPQSSTVDSQDEQNGDV) is disordered. Positions 869-881 (SAETETPQSSTVD) are enriched in polar residues.

This sequence belongs to the beta type-B retroviral polymerase family. HERV class-II K(HML-2) pol subfamily.

It carries out the reaction DNA(n) + a 2'-deoxyribonucleoside 5'-triphosphate = DNA(n+1) + diphosphate. It catalyses the reaction Endonucleolytic cleavage to 5'-phosphomonoester.. Its function is as follows. Early post-infection, the reverse transcriptase converts the viral RNA genome into double-stranded viral DNA. The RNase H domain of the reverse transcriptase performs two functions. It degrades the RNA template and specifically removes the RNA primer from the RNA/DNA hybrid. Following nuclear import, the integrase catalyzes the insertion of the linear, double-stranded viral DNA into the host cell chromosome. Endogenous Pol proteins may have kept, lost or modified their original function during evolution. The polypeptide is Endogenous retrovirus group K member 8 Pol protein (ERVK-8) (Homo sapiens (Human)).